The chain runs to 160 residues: Small ribosomal subunit protein bS6 (160 aa).

Belongs to the bacterial ribosomal protein bS6 family.

In terms of biological role, binds together with bS18 to 16S ribosomal RNA. This Ureaplasma urealyticum serovar 10 (strain ATCC 33699 / Western) protein is Small ribosomal subunit protein bS6.